A 131-amino-acid chain; its full sequence is Cystatin-like cysteine protease inhibitor EPIC3 (131 aa).

A signal peptide spans 1 to 20; it reads MAFTRSIALFAGLALAASSA. Residue Asn-33 is glycosylated (N-linked (GlcNAc...) asparagine). Residues 71 to 75 carry the Secondary area of contact motif; the sequence is QTVAG.

It belongs to the cystatin family.

The protein resides in the secreted. Functionally, secreted effector that interacts with and inhibits host apoplastic pathogenesis-related papain-like cysteine proteases. Inhibition of host proteases by a pathogen extracellular protease inhibitor forms a specific type of defense-counterdefense mechanism between plants and microbial pathogens. The chain is Cystatin-like cysteine protease inhibitor EPIC3 from Phytophthora infestans (Potato late blight agent).